The sequence spans 161 residues: Putative pre-16S rRNA nuclease (161 aa).

It belongs to the YqgF nuclease family.

The protein localises to the cytoplasm. Functionally, could be a nuclease involved in processing of the 5'-end of pre-16S rRNA. The chain is Putative pre-16S rRNA nuclease from Bartonella bacilliformis (strain ATCC 35685 / KC583 / Herrer 020/F12,63).